A 257-amino-acid polypeptide reads, in one-letter code: Putative cysteine-rich repeat secretory protein 28 (257 aa).

The first 26 residues, 1 to 26, serve as a signal peptide directing secretion; it reads MFSTFGSVPILTVVAIQLFLIRNVLS. Gnk2-homologous domains lie at 32–136 and 142–254; these read AYLH…TVDS and YEND…LYPF.

Belongs to the cysteine-rich repeat secretory protein family.

It is found in the secreted. This is Putative cysteine-rich repeat secretory protein 28 (CRRSP28) from Arabidopsis thaliana (Mouse-ear cress).